The chain runs to 419 residues: Double-stranded RNA-binding protein 1 (419 aa).

DRBM domains lie at 15 to 84 (VFKS…ELAK) and 101 to 170 (LCKN…AIQS). Positions 207–222 (KARKAQFKKKAQKGKR) match the Bipartite nuclear localization motif. 6 tandem repeats follow at residues 247 to 274 (EKIETTPNLEPSSCMNGLKEAAFGSVET), 275 to 302 (EKIETTPNLEPPSCMNGLKEAAFGSVET), 303 to 330 (EKIETTPNLEPPSCMNGLKEAAFGSVET), 331 to 358 (EKIETTPNLEPSSCMNGLKEAAFGSVET), 359 to 386 (EKIETTPNLEPPSCMNGLKEAAFGSVET), and 387 to 414 (EKIETTPNLESSSCMSGLKEAAFGSVET). The 6 X 28 AA repeats of E-K-I-E-T-T-P-N-L-E-[PS]-[PS]-S-C-M-[NS]-G-L-K-E-A-A-F-G-S-V-E-T stretch occupies residues 247-414 (EKIETTPNLE…KEAAFGSVET (168 aa)).

As to quaternary structure, homodimer. Heterodimer with DRB2, DRB4 or DRB5. Interacts with SE and DCL1. Interacts with RCF3, RS40 and RS41. Expressed in rosette and cauline leaves, stems, roots, flowers and siliques.

The protein localises to the nucleus. The protein resides in the nucleus speckle. In terms of biological role, double-stranded RNA-binding protein involved in RNA-mediated post-transcriptional gene silencing (PTGS). Functions in the microRNAs (miRNAs) biogenesis by assisting DICER-LIKE 1 (DCL1) in the accurate processing from primary miRNAs (pri-miRNAs) to miRNAs in the nucleus. Forms a complex with SERRATE (SE) and DCL1 to promote accurate processing of pri-miRNAs by DCL1. Binds and assist DCL1 for accurate processing of precursor miRNAs (pre-miRNA). Indirectly involved in the production of trans-acting small interfering RNAs (ta-siRNAs) derived from the TAS1, TAS2 or TAS3 endogenous transcripts by participating in the production of their initiating miRNAs. Involved with argonaute 1 (AGO1) in the guide strand selection from miRNA duplexes, presumably by directional loading of the miRNA duplex (guide stand and passenger strand) onto the RNA-induced silencing complex (RISC) for passenger strand degradation. Does not participate in sense transgene-induced post-transcriptional gene silencing (S-PTGS). Involved in several plant development aspects and response to hormones through its role in miRNAs processing. This chain is Double-stranded RNA-binding protein 1 (DRB1), found in Arabidopsis thaliana (Mouse-ear cress).